Consider the following 267-residue polypeptide: 2-keto-3-deoxy-L-rhamnonate aldolase (267 aa).

The active-site Proton acceptor is the H49. Position 151 (Q151) interacts with substrate. E153 serves as a coordination point for Mg(2+). Substrate is bound by residues A178 and D179. D179 is a binding site for Mg(2+).

The protein belongs to the HpcH/HpaI aldolase family. KDR aldolase subfamily. In terms of assembly, homohexamer. Mg(2+) is required as a cofactor.

It catalyses the reaction 2-dehydro-3-deoxy-L-rhamnonate = (S)-lactaldehyde + pyruvate. Catalyzes the reversible retro-aldol cleavage of 2-keto-3-deoxy-L-rhamnonate (KDR) to pyruvate and lactaldehyde. This is 2-keto-3-deoxy-L-rhamnonate aldolase from Salmonella agona (strain SL483).